The following is a 943-amino-acid chain: Leucine--tRNA ligase (943 aa).

Positions 40–51 match the 'HIGH' region motif; it reads PYPSGAGLHVGH. The short motif at 717 to 721 is the 'KMSKS' region element; that stretch reads KMSKS. Residue Lys-720 participates in ATP binding.

It belongs to the class-I aminoacyl-tRNA synthetase family.

It localises to the cytoplasm. The catalysed reaction is tRNA(Leu) + L-leucine + ATP = L-leucyl-tRNA(Leu) + AMP + diphosphate. The sequence is that of Leucine--tRNA ligase from Bacteroides fragilis (strain YCH46).